The sequence spans 161 residues: Cytochrome c-type biogenesis protein CcmE (161 aa).

Residues 1 to 8 lie on the Cytoplasmic side of the membrane; the sequence is MNARRKKR. Residues 9-29 traverse the membrane as a helical; Signal-anchor for type II membrane protein segment; the sequence is LTLAVALIGGVAAIASLLLYA. At 30 to 161 the chain is on the periplasmic side; sequence LNSNLNLFYT…DYNEQQKTSY (132 aa). Residues H131 and Y135 each coordinate heme.

This sequence belongs to the CcmE/CycJ family.

The protein resides in the cell inner membrane. In terms of biological role, heme chaperone required for the biogenesis of c-type cytochromes. Transiently binds heme delivered by CcmC and transfers the heme to apo-cytochromes in a process facilitated by CcmF and CcmH. The chain is Cytochrome c-type biogenesis protein CcmE from Shewanella sediminis (strain HAW-EB3).